Reading from the N-terminus, the 161-residue chain is V-type proton ATPase 16 kDa proteolipid subunit c 2 (161 aa).

At 1 to 15 the chain is on the lumenal side; sequence MSYDLETAEHAAYAP. Residues 16–36 form a helical membrane-spanning segment; sequence FFGYMGAASAQIFTVLGAAYG. Topologically, residues 37–58 are cytoplasmic; sequence TAKSAVGICSMGVMRPELIMKS. A helical transmembrane segment spans residues 59-79; the sequence is VIPVIMAGIIGIYGLVVAMVL. Over 80-98 the chain is Lumenal; that stretch reads KGKVQAASAGYDLNKGFAH. The chain crosses the membrane as a helical span at residues 99 to 119; it reads LAAGLTCGLCGLGAGYAIGIV. The Cytoplasmic segment spans residues 120 to 137; it reads GDAGVRGTAQQPRLFVGM. Residues 138–158 form a helical membrane-spanning segment; that stretch reads ILILIFSEVLGLYGMIVALIL. The Lumenal segment spans residues 159–161; sequence GTS.

This sequence belongs to the V-ATPase proteolipid subunit family. As to quaternary structure, V-ATPase is a heteromultimeric enzyme made up of two complexes: the ATP-hydrolytic V1 complex and the proton translocation V0 complex. The V1 complex consists of three catalytic AB heterodimers that form a heterohexamer, three peripheral stalks each consisting of EG heterodimers, one central rotor including subunits D and F, and the regulatory subunits C and H. The proton translocation complex V0 consists of the proton transport subunit a, a ring of proteolipid subunits c9c'', rotary subunit d, subunits e and f, and the accessory subunits vah-19/Ac45 and vah-20/PRR.

Its subcellular location is the membrane. Proton-conducting pore forming subunit of the V0 complex of vacuolar(H+)-ATPase (V-ATPase), a multisubunit enzyme composed of a peripheral complex (V1) that hydrolyzes ATP and a membrane integral complex (V0) that translocates protons. V-ATPase is responsible for acidifying and maintaining the pH of intracellular compartments and in some cell types, is targeted to the plasma membrane, where it is responsible for acidifying the extracellular environment. Involved in necrotic cell death. Required along with other vacuolar ATPase components for the removal of protein aggregates which form in immature oocytes in the distal gonad. This removal occurs as the oocytes mature and move to the proximal gonad, is triggered by the introduction of sperm through mating and occurs before fertilization. The introduction of sperm triggers V-ATPase accumulation in proximal oocytes and induces lysosomal acidification which leads to engulfing of protein aggregates by lysosomes and subsequent clearance of the aggregates. Lysosomal acidification also leads to changes in mitochondrial morphology and function. Mitochondria in distal immature oocytes are fragmented, produce high levels of reactive oxygen species (ROS) and have high membrane potential, indicative of metabolic inactivity. In contrast, mitochondria in proximal mature oocytes are tubular with lower ROS levels and membrane potential, indicative of an active metabolic state required for aggregate mobilization before clearance. The chain is V-type proton ATPase 16 kDa proteolipid subunit c 2 from Caenorhabditis briggsae.